Consider the following 396-residue polypeptide: Probable isocitrate dehydrogenase [NAD] gamma 2, mitochondrial (396 aa).

A mitochondrion-targeting transit peptide spans 1–25 (MLAVTSCSMKTVLQYAVFLGHSREV). Thr-117 provides a ligand contact to citrate. Positions 133, 164, and 251 each coordinate substrate. A Mn(2+)-binding site is contributed by Asp-251. Asn-321 lines the ADP pocket.

This sequence belongs to the isocitrate and isopropylmalate dehydrogenases family. Heterooligomer of subunits alpha (IDH3A), beta (IDH3B), and gamma (IDH3G) in the apparent ratio of 2:1:1. The heterodimer containing one IDH3A and one IDH3B subunit and the heterodimer containing one IDH3A and one IDH3G subunit assemble into a heterotetramer (which contains two subunits of IDH3A, one of IDH3B and one of IDH3G) and further into the heterooctamer. Mg(2+) is required as a cofactor. It depends on Mn(2+) as a cofactor.

It is found in the mitochondrion. With respect to regulation, the heterotetramer and the heterodimer composed of IDH3A and IDH3G subunits can be allosterically activated by citrate (CIT) or/and ADP, and the two activators can act independently or synergistically. The heterodimer composed of IDH3A and IDH3B subunits cannot be allosterically regulated and the allosteric regulation of the heterotetramer is through the IDH3G subunit and not the IDH3B subunit. The IDH3G subunit contains the allosteric site which consists of a CIT-binding site and an ADP-binding site, and the binding of CIT and ADP causes conformational changes at the allosteric site which are transmitted to the active site in the catalytic subunit (IDH3A) through a cascade of conformational changes at the heterodimer interface, leading to stabilization of the isocitrate-binding at the active site and thus activation of the enzyme. ATP can activate the heterotetramer and the heterodimer composed of IDH3A and IDH3G subunits at low concentrations but inhibits their activities at high concentrations, whereas ATP exhibits only inhibitory effect on the heterodimer composed of IDH3A and IDH3B subunits. In terms of biological role, regulatory subunit which plays a role in the allosteric regulation of the enzyme catalyzing the decarboxylation of isocitrate (ICT) into alpha-ketoglutarate. The heterodimer composed of the alpha (IDH3A) and beta (IDH3B) subunits and the heterodimer composed of the alpha (IDH3A) and gamma (IDH3G) subunits, have considerable basal activity but the full activity of the heterotetramer (containing two subunits of IDH3A, one of IDH3B and one of IDH3G) requires the assembly and cooperative function of both heterodimers. The sequence is that of Probable isocitrate dehydrogenase [NAD] gamma 2, mitochondrial from Mus musculus (Mouse).